Consider the following 465-residue polypeptide: Sushi repeat-containing protein SRPX2 (465 aa).

An N-terminal signal peptide occupies residues 1 to 23 (MASQLTQRGALFLLFFLTPAVTP). Sushi domains follow at residues 69-119 (ATCY…YCRQ), 120-178 (MRCH…VCVD), and 262-321 (RRCP…ICAP). 4 disulfides stabilise this stretch: Cys71-Cys105, Cys91-Cys117, Cys122-Cys163, and Cys149-Cys176. The HYR domain occupies 177–261 (VDIDPPKIRC…SCKFIVKVQV (85 aa)). Intrachain disulfides connect Cys264–Cys306 and Cys292–Cys319.

Forms homooligomers. Interacts with PLAUR (via the UPAR/Ly6 domains), ADAMTS4 and CTSB. Interacts with HGF; the interaction increases the mitogenic activity of HGF. Post-translationally, contains chondroitin sulfate chains. As to expression, expressed in neurons of the rolandic area of the brain (at protein level). Highly expressed in the brain, placenta, lung, trachea, uterus, adrenal gland, heart, ovary and placenta. Weakly expressed in the peripheral blood, brain and bone marrow. Expressed in numerous cancer cell lines and in gastrointestinal cancer cells. Higher levels found in colorectal cancers than in normal colonic mucosa.

The protein localises to the secreted. It localises to the cytoplasm. The protein resides in the cell surface. Its subcellular location is the synapse. Its function is as follows. Acts as a ligand for the urokinase plasminogen activator surface receptor. Plays a role in angiogenesis by inducing endothelial cell migration and the formation of vascular network (cords). Involved in cellular migration and adhesion. Increases the phosphorylation levels of FAK. Interacts with and increases the mitogenic activity of HGF. Promotes synapse formation. May have a role in the perisylvian region, critical for language and cognitive development. In Homo sapiens (Human), this protein is Sushi repeat-containing protein SRPX2 (SRPX2).